The chain runs to 144 residues: UPF0102 protein BTH_I3148 (144 aa).

Residues 1–20 (MCHARAARQATGEAEAAPRD) are disordered.

It belongs to the UPF0102 family.

This Burkholderia thailandensis (strain ATCC 700388 / DSM 13276 / CCUG 48851 / CIP 106301 / E264) protein is UPF0102 protein BTH_I3148.